Reading from the N-terminus, the 396-residue chain is MDCNMVSSFPWDWENLIMSNQSKTENEKKQQSTEWEFEKGEGIESIVPDFLGFEKVSSGSATSFWHTAVSKSSQSTSINSSSPEDKRCNLASQSSPGDSSSNIDFLQVKPSTALEVPIASAESDLCLKLGKRTYSEEFWGRNNNDLSAVSMNLLTPSVVARKKTKSCGQSMQVPRCQIDGCELDLSSSKDYHRKHRVCETHSKCPKVVVSGLERRFCQQCSRFHAVSEFDEKKRSCRKRLSHHNARRRKPQGVFPLNSERVFDRRQHTSMLWNGLSLNTRSEEKYTWGTTYETKPTQMESGFTLSFQRGNGSEDQLFTGSTLSFSAFQTSGGFSAGKSNIQLPDKGVGECSGGLHESHDFYSALSLLSTTSDSQGIKHTPVAEPPPIFGTFPSHFI.

The disordered stretch occupies residues 74–104 (QSTSINSSSPEDKRCNLASQSSPGDSSSNID). Over residues 90–104 (LASQSSPGDSSSNID) the composition is skewed to polar residues. The SBP-type zinc finger occupies 173-250 (VPRCQIDGCE…SHHNARRRKP (78 aa)). C176, C181, C198, H201, C217, C220, H224, and C236 together coordinate Zn(2+). The short motif at 233-249 (KRSCRKRLSHHNARRRK) is the Bipartite nuclear localization signal element.

Zn(2+) is required as a cofactor.

The protein resides in the nucleus. Trans-acting factor that binds specifically to the consensus nucleotide sequence 5'-TNCGTACAA-3'. In Arabidopsis thaliana (Mouse-ear cress), this protein is Squamosa promoter-binding-like protein 10 (SPL10).